A 63-amino-acid chain; its full sequence is Large ribosomal subunit protein bL28 (63 aa).

Residues 1 to 20 are disordered; the sequence is MSKRCAITGKGPMVGNNVSH.

Belongs to the bacterial ribosomal protein bL28 family.

In Campylobacter concisus (strain 13826), this protein is Large ribosomal subunit protein bL28.